A 554-amino-acid chain; its full sequence is Macrophage colony-stimulating factor 1 (554 aa).

Residues 1–32 (MTAPGAAGRCPPTTWLGSLLLLVCLLASRSIT) form the signal peptide. Over 33-496 (EEVSEYCSHM…GSFSPQLQES (464 aa)) the chain is Lumenal. Intrachain disulfides connect C39-C122, C80-C171, and C134-C178. Residues N154 and N172 are each glycosylated (N-linked (GlcNAc...) asparagine). The interval 224 to 488 (EDSEGTEGSS…TGHERQSEGS (265 aa)) is disordered. T266 is subject to Phosphothreonine; by FAM20C. S309 is a glycosylation site (O-linked (Xyl...) (chondroitin sulfate) serine). Over residues 344-354 (LSASSPLPASA) the composition is skewed to low complexity. 2 O-linked (GalNAc...) threonine glycosylation sites follow: T363 and T365. Over residues 404 to 433 (RISSLRPQGLSNPSTLSAQPQLSRSHSSGS) the composition is skewed to polar residues. The tract at residues 406 to 426 (SSLRPQGLSNPSTLSAQPQLS) is O-glycosylated at one site. Residues 440–453 (LEGRRSTRDRRSPA) are compositionally biased toward basic and acidic residues. Residues 497–517 (VFHLLVPSVILVLLAVGGLLF) traverse the membrane as a helical segment. Residues 518–554 (YRWRRRSHQEPQRADSPLEQPEGSPLTQDDRQVELPV) lie on the Cytoplasmic side of the membrane. The tract at residues 526–554 (QEPQRADSPLEQPEGSPLTQDDRQVELPV) is disordered. The span at 545–554 (QDDRQVELPV) shows a compositional bias: basic and acidic residues.

Homodimer or heterodimer; disulfide-linked. Likely to exist in multiple forms: homodimer consisting of 2 identical 150-200 kDa proteoglycan subunits, heterodimer consisting of a 150-200 kDa proteoglycan subunit and a truncated 43 kDa subunit, and homodimer consisting of 2 identical 43 kDa subunits. Interacts with CSF1R. N-glycosylated. In terms of processing, O-glycosylated; contains chondroitin sulfate. O-glycosylated with core 1 or possibly core 8 glycans. Post-translationally, O-glycosylated.

It localises to the cell membrane. It is found in the secreted. The protein localises to the extracellular space. Its function is as follows. Cytokine that plays an essential role in the regulation of survival, proliferation and differentiation of hematopoietic precursor cells, especially mononuclear phagocytes, such as macrophages and monocytes. Promotes the release of pro-inflammatory chemokines, and thereby plays an important role in innate immunity and in inflammatory processes. Plays an important role in the regulation of osteoclast proliferation and differentiation, the regulation of bone resorption, and is required for normal bone development. Required for normal male and female fertility. Promotes reorganization of the actin cytoskeleton, regulates formation of membrane ruffles, cell adhesion and cell migration. Plays a role in lipoprotein clearance. This is Macrophage colony-stimulating factor 1 (CSF1) from Homo sapiens (Human).